A 405-amino-acid polypeptide reads, in one-letter code: Interferon alpha/beta receptor 1a (405 aa).

The N-terminal stretch at 1–20 (MKVGFALVLLWSLPITNVLA) is a signal peptide. The Extracellular segment spans residues 21–233 (ELPQPQNLTL…QTEGDTPYGQ (213 aa)). Fibronectin type-III domains follow at residues 22-123 (LPQP…IDAS) and 126-228 (PPSR…TEGD). Asn27 and Asn70 each carry an N-linked (GlcNAc...) asparagine glycan. 2 cysteine pairs are disulfide-bonded: Cys75/Cys83 and Cys201/Cys222. N-linked (GlcNAc...) asparagine glycosylation is present at Asn212. A helical transmembrane segment spans residues 234 to 254 (IFLYFLVSMMVCFLLVLLSSY). At 255 to 405 (AFFRFYRGLK…LDEGVVDICV (151 aa)) the chain is on the cytoplasmic side. The disordered stretch occupies residues 325–374 (TAPPSELEQDSGRRIRQDSGDSGIYSTEGGSAQQGRSGGEPIRRDQEVDS). Residues 334-343 (DSGRRIRQDS) show a composition bias toward basic and acidic residues. Positions 348–359 (IYSTEGGSAQQG) are enriched in polar residues.

It belongs to the type II cytokine receptor family. Heterodimer with IFNAR2; forming the receptor for type I interferon.

It localises to the cell membrane. Together with IFNAR2, forms the heterodimeric receptor for type I interferons (including interferons alpha, beta, epsilon, omega and kappa). Type I interferon binding activates the JAK-STAT signaling cascade, resulting in transcriptional activation or repression of interferon-regulated genes that encode the effectors of the interferon response. Mechanistically, type I interferon-binding brings the IFNAR1 and IFNAR2 subunits into close proximity with one another, driving their associated Janus kinases (JAKs) (TYK2 bound to IFNAR1 and JAK1 bound to IFNAR2) to cross-phosphorylate one another. The activated kinases phosphorylate specific tyrosine residues on the intracellular domains of IFNAR1 and IFNAR2, forming docking sites for the STAT transcription factors. STAT proteins are then phosphorylated by the JAKs, promoting their translocation into the nucleus to regulate expression of interferon-regulated genes. The sequence is that of Interferon alpha/beta receptor 1a from Oncorhynchus mykiss (Rainbow trout).